The primary structure comprises 87 residues: U3-theraphotoxin-Hhn1j (87 aa).

The signal sequence occupies residues 1-24 (MVNMKASMFLTFAGLVLLFVVCYA). A propeptide spanning residues 25-52 (SESEEKEFPKEMLSSIFAVDNDFKQEER) is cleaved from the precursor. 3 disulfides stabilise this stretch: Cys54–Cys67, Cys61–Cys72, and Cys66–Cys79.

Belongs to the neurotoxin 10 (Hwtx-1) family. 51 (Hntx-8) subfamily. Hntx-8 sub-subfamily. In terms of tissue distribution, expressed by the venom gland.

It localises to the secreted. Its function is as follows. Ion channel inhibitor. The polypeptide is U3-theraphotoxin-Hhn1j (Cyriopagopus hainanus (Chinese bird spider)).